The chain runs to 58 residues: Small ribosomal subunit protein bS21 (58 aa).

Residues 27-58 (GVLSEARKHEHYEKPSVKRKKKSEAARKRKFK) are disordered. The segment covering 31 to 42 (EARKHEHYEKPS) has biased composition (basic and acidic residues). Residues 43 to 58 (VKRKKKSEAARKRKFK) are compositionally biased toward basic residues.

This sequence belongs to the bacterial ribosomal protein bS21 family.

The polypeptide is Small ribosomal subunit protein bS21 (Desulfitobacterium hafniense (strain DSM 10664 / DCB-2)).